Here is a 97-residue protein sequence, read N- to C-terminus: Co-chaperonin GroES (97 aa).

The protein belongs to the GroES chaperonin family. In terms of assembly, heptamer of 7 subunits arranged in a ring. Interacts with the chaperonin GroEL.

It localises to the cytoplasm. Functionally, together with the chaperonin GroEL, plays an essential role in assisting protein folding. The GroEL-GroES system forms a nano-cage that allows encapsulation of the non-native substrate proteins and provides a physical environment optimized to promote and accelerate protein folding. GroES binds to the apical surface of the GroEL ring, thereby capping the opening of the GroEL channel. In Pseudomonas putida (Arthrobacter siderocapsulatus), this protein is Co-chaperonin GroES.